Consider the following 130-residue polypeptide: Small ribosomal subunit protein uS9 (130 aa).

The segment at R109 to R130 is disordered. A compositionally biased stretch (basic residues) spans K111–R130.

Belongs to the universal ribosomal protein uS9 family.

The protein is Small ribosomal subunit protein uS9 of Caldanaerobacter subterraneus subsp. tengcongensis (strain DSM 15242 / JCM 11007 / NBRC 100824 / MB4) (Thermoanaerobacter tengcongensis).